We begin with the raw amino-acid sequence, 413 residues long: Serine/threonine transporter SstT (413 aa).

A run of 10 helical transmembrane segments spans residues 18 to 38 (LSLV…ALFA), 52 to 72 (FVSA…MASI), 86 to 106 (ILFL…IASM), 119 to 139 (IAVS…LSVV), 145 to 165 (ALMN…GVAI), 196 to 216 (LGIF…ALIG), 221 to 241 (LAVL…LIVF), 292 to 312 (VSIP…ITVL), 320 to 340 (LGIA…AICA), and 360 to 380 (LFGI…IIGV).

Belongs to the dicarboxylate/amino acid:cation symporter (DAACS) (TC 2.A.23) family.

It localises to the cell inner membrane. It catalyses the reaction L-serine(in) + Na(+)(in) = L-serine(out) + Na(+)(out). The catalysed reaction is L-threonine(in) + Na(+)(in) = L-threonine(out) + Na(+)(out). Involved in the import of serine and threonine into the cell, with the concomitant import of sodium (symport system). The polypeptide is Serine/threonine transporter SstT (Pseudomonas fluorescens (strain Pf0-1)).